A 365-amino-acid polypeptide reads, in one-letter code: MNFDPIDDFDDESQVSAELVAGDGDVEASLRPKSLDDFIGQPRVREQLQLVLTGAKLRGSTPDHILMSGPPGLGKTSMAMIIAGELGSSLRLTSGPALERAGDLAAMLSNLVEGDVLFIDEIHRIARPAEEMLYLAMEDFRVDVVVGKGPGATSIPLEVAPFTLVGATTRSGALTGPLRDRFGFTAHMDFYEPEELQQILMRSAGILGVNLEVDAGAEIARRSRGTPRIANRLLRRVRDFAEVRADGIVTMDVAQAALAVYDVDQLGLDRLDRSVLSALVRSFGGGPVGVSTLAVAVGEEPSTVEEVCEPFLVRAGMIARTPRGRVATAAAWTQLGMTPPPDAAAGGIEVRVNEPQATLFDPNGE.

The tract at residues 1–191 is large ATPase domain (RuvB-L); sequence MNFDPIDDFD…FGFTAHMDFY (191 aa). ATP is bound by residues Leu30, Arg31, Gly72, Lys75, Thr76, Ser77, 138-140, Arg181, Tyr191, and Arg228; that span reads EDF. Thr76 provides a ligand contact to Mg(2+). The small ATPAse domain (RuvB-S) stretch occupies residues 192–262; it reads EPEELQQILM…VAQAALAVYD (71 aa). Residues 265 to 365 form a head domain (RuvB-H) region; it reads QLGLDRLDRS…QATLFDPNGE (101 aa). Arg320 and Arg325 together coordinate DNA.

The protein belongs to the RuvB family. Homohexamer. Forms an RuvA(8)-RuvB(12)-Holliday junction (HJ) complex. HJ DNA is sandwiched between 2 RuvA tetramers; dsDNA enters through RuvA and exits via RuvB. An RuvB hexamer assembles on each DNA strand where it exits the tetramer. Each RuvB hexamer is contacted by two RuvA subunits (via domain III) on 2 adjacent RuvB subunits; this complex drives branch migration. In the full resolvosome a probable DNA-RuvA(4)-RuvB(12)-RuvC(2) complex forms which resolves the HJ.

It localises to the cytoplasm. It catalyses the reaction ATP + H2O = ADP + phosphate + H(+). Its function is as follows. The RuvA-RuvB-RuvC complex processes Holliday junction (HJ) DNA during genetic recombination and DNA repair, while the RuvA-RuvB complex plays an important role in the rescue of blocked DNA replication forks via replication fork reversal (RFR). RuvA specifically binds to HJ cruciform DNA, conferring on it an open structure. The RuvB hexamer acts as an ATP-dependent pump, pulling dsDNA into and through the RuvAB complex. RuvB forms 2 homohexamers on either side of HJ DNA bound by 1 or 2 RuvA tetramers; 4 subunits per hexamer contact DNA at a time. Coordinated motions by a converter formed by DNA-disengaged RuvB subunits stimulates ATP hydrolysis and nucleotide exchange. Immobilization of the converter enables RuvB to convert the ATP-contained energy into a lever motion, pulling 2 nucleotides of DNA out of the RuvA tetramer per ATP hydrolyzed, thus driving DNA branch migration. The RuvB motors rotate together with the DNA substrate, which together with the progressing nucleotide cycle form the mechanistic basis for DNA recombination by continuous HJ branch migration. Branch migration allows RuvC to scan DNA until it finds its consensus sequence, where it cleaves and resolves cruciform DNA. This is Holliday junction branch migration complex subunit RuvB from Rhodococcus erythropolis (strain PR4 / NBRC 100887).